Here is a 285-residue protein sequence, read N- to C-terminus: Dermonecrotic toxin LlSicTox-alphaIII2 (285 aa).

The active site involves His-12. Positions 32 and 34 each coordinate Mg(2+). The Nucleophile role is filled by His-47. The cysteines at positions 51 and 57 are disulfide-linked. Asp-91 contributes to the Mg(2+) binding site.

The protein belongs to the arthropod phospholipase D family. Class I subfamily. Mg(2+) is required as a cofactor. Expressed by the venom gland.

Its subcellular location is the secreted. It carries out the reaction an N-(acyl)-sphingosylphosphocholine = an N-(acyl)-sphingosyl-1,3-cyclic phosphate + choline. The catalysed reaction is an N-(acyl)-sphingosylphosphoethanolamine = an N-(acyl)-sphingosyl-1,3-cyclic phosphate + ethanolamine. It catalyses the reaction a 1-acyl-sn-glycero-3-phosphocholine = a 1-acyl-sn-glycero-2,3-cyclic phosphate + choline. The enzyme catalyses a 1-acyl-sn-glycero-3-phosphoethanolamine = a 1-acyl-sn-glycero-2,3-cyclic phosphate + ethanolamine. Dermonecrotic toxins cleave the phosphodiester linkage between the phosphate and headgroup of certain phospholipids (sphingolipid and lysolipid substrates), forming an alcohol (often choline) and a cyclic phosphate. This toxin acts on sphingomyelin (SM) (228.2 U/mg). It may also act on ceramide phosphoethanolamine (CPE), lysophosphatidylcholine (LPC) and lysophosphatidylethanolamine (LPE), but not on lysophosphatidylserine (LPS), and lysophosphatidylglycerol (LPG). It acts by transphosphatidylation, releasing exclusively cyclic phosphate products as second products. Induces dermonecrosis, hemolysis, increased vascular permeability, edema, inflammatory response, and platelet aggregation. Is lethal to mice. This chain is Dermonecrotic toxin LlSicTox-alphaIII2, found in Loxosceles laeta (South American recluse spider).